The sequence spans 1399 residues: DNA-directed RNA polymerase subunit beta' (1399 aa).

Cys70, Cys72, Cys85, and Cys88 together coordinate Zn(2+). Residues Asp460, Asp462, and Asp464 each coordinate Mg(2+). Zn(2+) contacts are provided by Cys814, Cys888, Cys895, and Cys898.

The protein belongs to the RNA polymerase beta' chain family. The RNAP catalytic core consists of 2 alpha, 1 beta, 1 beta' and 1 omega subunit. When a sigma factor is associated with the core the holoenzyme is formed, which can initiate transcription. Requires Mg(2+) as cofactor. Zn(2+) serves as cofactor.

The catalysed reaction is RNA(n) + a ribonucleoside 5'-triphosphate = RNA(n+1) + diphosphate. DNA-dependent RNA polymerase catalyzes the transcription of DNA into RNA using the four ribonucleoside triphosphates as substrates. The chain is DNA-directed RNA polymerase subunit beta' from Pseudomonas putida (strain ATCC 700007 / DSM 6899 / JCM 31910 / BCRC 17059 / LMG 24140 / F1).